We begin with the raw amino-acid sequence, 315 residues long: WD repeat domain-containing protein 83 (315 aa).

7 WD repeats span residues C23–T62, G65–K104, G107–I146, E151–D188, Y189–E228, V233–K272, and V275–N313.

This sequence belongs to the WD repeat MORG1 family.

It is found in the cytoplasm. Its function is as follows. Molecular scaffold protein for various multimeric protein complexes. Acts as a module in the assembly of a multicomponent scaffold for the ERK pathway, linking ERK responses to specific agonists. Also involved in response to hypoxia by acting as a negative regulator of HIF1A/HIF-1-alpha. This is WD repeat domain-containing protein 83 (wdr83) from Danio rerio (Zebrafish).